Here is a 239-residue protein sequence, read N- to C-terminus: tRNA (guanine-N(7)-)-methyltransferase (239 aa).

The S-adenosyl-L-methionine site is built by Glu-69, Glu-94, Asp-121, and Asp-144. Residue Asp-144 is part of the active site. Substrate is bound at residue Lys-148. Positions 150-155 (RHNKRR) are interaction with RNA. Substrate is bound by residues Asp-180 and 217-220 (TKFE).

Belongs to the class I-like SAM-binding methyltransferase superfamily. TrmB family. As to quaternary structure, monomer.

It catalyses the reaction guanosine(46) in tRNA + S-adenosyl-L-methionine = N(7)-methylguanosine(46) in tRNA + S-adenosyl-L-homocysteine. The protein operates within tRNA modification; N(7)-methylguanine-tRNA biosynthesis. Catalyzes the formation of N(7)-methylguanine at position 46 (m7G46) in tRNA. The chain is tRNA (guanine-N(7)-)-methyltransferase from Shigella dysenteriae serotype 1 (strain Sd197).